The following is a 255-amino-acid chain: Transmembrane protein 81 (255 aa).

The N-terminal stretch at 1–30 is a signal peptide; that stretch reads MKVLATSFVLGSLGLAFYLPLVVTTPKTLA. The Extracellular segment spans residues 31 to 226; that stretch reads IPEKLQEAVG…HPKWKKKVAS (196 aa). Asn45 carries an N-linked (GlcNAc...) asparagine glycan. One can recognise an Ig-like domain in the interval 83-171; sequence TNWICGMLHF…VQLVKNLRLV (89 aa). The cysteines at positions 104 and 160 are disulfide-linked. Residues 227–247 form a helical membrane-spanning segment; that stretch reads ALGIGIAIGVVGGVLVRIVLC. At 248-255 the chain is on the cytoplasmic side; that stretch reads ALRGGLQQ.

As to quaternary structure, forms a complex with IZUMO1 and SPACA6 on spermatocyte cell membrane required for fertilization. In terms of tissue distribution, highly expressed in sperm (at protein level).

It localises to the cell membrane. In terms of biological role, essential fertilization factor required for male fertility. Part of a conserved trimeric sperm complex with the essential fertilization factors IZUMO1 and SPACA6 which bridges sperm and oocyte membranes during fertilization by binding to IZUMO1R/JUNO on the oocyte. This is Transmembrane protein 81 from Homo sapiens (Human).